The primary structure comprises 1943 residues: Beta-L-arabinobiosidase (1943 aa).

Residues Met1–Ala32 constitute a signal peptide (tat-type signal). 2 F5/8 type C domains span residues Thr892 to Thr1049 and Ser1142 to Ile1302. The PKD domain maps to Thr1061–Asn1157. FIVAR domains lie at Ala1678–Ala1716, Asp1746–Gln1790, and Gln1823–Ala1864. The tract at residues Thr1875–Thr1906 is disordered. Over residues Asp1890–Arg1902 the composition is skewed to basic and acidic residues. The helical transmembrane segment at Ala1908–Leu1928 threads the bilayer.

This sequence belongs to the glycosyl hydrolase 121 family. In terms of processing, predicted to be exported by the Tat system. The position of the signal peptide cleavage has not been experimentally proven.

Its subcellular location is the membrane. It catalyses the reaction 4-O-(beta-L-arabinofuranosyl-(1-&gt;2)-beta-L-arabinofuranosyl-(1-&gt;2)-beta-L-arabinofuranosyl)-(2S,4S)-4-hydroxyproline + H2O = 4-O-(beta-L-arabinofuranosyl)-(2S,4S)-4-hydroxyproline + beta-L-arabinofuranosyl-(1-&gt;2)-beta-L-arabinofuranose. In terms of biological role, beta-L-arabinobiosidase that removes L-arabinofuranose-beta-1,2-L-arabinofuranose disaccharide from various substrates such as carrot extensin and potato lectin. Also acts on L-arabinofuranose (Ara)-beta-1,2-Ara-beta-1,2-Ara-beta-Hyp (Ara(3)-Hyp) but not on Ara-beta-1,3-Ara-beta-1,2-Ara-beta-1,2-Ara-beta--Hyp (Ara(4)-Hyp) or Ara-beta-1,2-Ara-beta-Hyp (Ara(2)-Hyp), suggesting a specificity for unmodified Ara(3)-Hyp substrate. In the presence of 1-alkanols, shows transglycosylation activity, retaining the anomeric configuration of the arabinofuranose residue. The polypeptide is Beta-L-arabinobiosidase (hypBA2) (Bifidobacterium longum subsp. longum (strain ATCC 15707 / DSM 20219 / JCM 1217 / NCTC 11818 / E194b)).